Reading from the N-terminus, the 207-residue chain is Small ribosomal subunit protein uS4c (207 aa).

The segment at Thr22–Gln51 is disordered. Residues Met97–Leu158 enclose the S4 RNA-binding domain.

The protein belongs to the universal ribosomal protein uS4 family. As to quaternary structure, part of the 30S ribosomal subunit. Contacts protein S5. The interaction surface between S4 and S5 is involved in control of translational fidelity.

Its subcellular location is the plastid. The protein resides in the chloroplast. Functionally, one of the primary rRNA binding proteins, it binds directly to 16S rRNA where it nucleates assembly of the body of the 30S subunit. In terms of biological role, with S5 and S12 plays an important role in translational accuracy. This Chlorella vulgaris (Green alga) protein is Small ribosomal subunit protein uS4c (rps4).